The primary structure comprises 527 residues: Laccase-5 (527 aa).

An N-terminal signal peptide occupies residues 1–23; the sequence is MGKFHSFVNVVALSLSLSGRVFG. One can recognise a Plastocyanin-like 1 domain in the interval 25-150; the sequence is IGPVTDLTIS…DGLRGPLVVY (126 aa). N-linked (GlcNAc...) asparagine glycans are attached at residues Asn74 and Asn77. 4 residues coordinate Cu cation: His87, His89, His132, and His134. Cystine bridges form between Cys108–Cys516 and Cys140–Cys230. 10 N-linked (GlcNAc...) asparagine glycosylation sites follow: Asn156, Asn209, Asn233, Asn242, Asn276, Asn317, Asn358, Asn366, Asn393, and Asn402. In terms of domain architecture, Plastocyanin-like 2 spans 162-306; that stretch reads VDDDTTVITL…GGVNSAILRY (145 aa). A Plastocyanin-like 3 domain is found at 373–498; the sequence is TVPVLLQILS…AGFAIVFAED (126 aa). His425, His428, His430, His480, Cys481, His482, and His486 together coordinate Cu cation.

This sequence belongs to the multicopper oxidase family. The cofactor is Cu cation.

Its subcellular location is the secreted. The catalysed reaction is 4 hydroquinone + O2 = 4 benzosemiquinone + 2 H2O. In terms of biological role, lignin degradation and detoxification of lignin-derived products. The polypeptide is Laccase-5 (LCC5) (Trametes versicolor (White-rot fungus)).